The primary structure comprises 358 residues: Heme A synthase (358 aa).

The next 8 helical transmembrane spans lie at 22–42, 107–127, 139–159, 173–193, 208–228, 269–289, 302–322, and 324–344; these read IQVWLYSILLLCLAIVLVGGA, ILGRLVGLLALLGLIWFWATK, IVPILIAFQGAIGWWMVASGI, AFHLITACFIITFVTYLSRGF, FAGWLVVLILIEIYFGALVAG, FIHRFFAYFLFFVTIIHAFYV, AFFICVMIVVQAFLGIITLLR, and VPIGLGLIHQSVALAILCFSV. Residue His-271 coordinates heme. His-332 provides a ligand contact to heme.

This sequence belongs to the COX15/CtaA family. Type 2 subfamily. In terms of assembly, interacts with CtaB. It depends on heme b as a cofactor.

The protein localises to the cell membrane. The enzyme catalyses Fe(II)-heme o + 2 A + H2O = Fe(II)-heme a + 2 AH2. Its pathway is porphyrin-containing compound metabolism; heme A biosynthesis; heme A from heme O: step 1/1. In terms of biological role, catalyzes the conversion of heme O to heme A by two successive hydroxylations of the methyl group at C8. The first hydroxylation forms heme I, the second hydroxylation results in an unstable dihydroxymethyl group, which spontaneously dehydrates, resulting in the formyl group of heme A. The chain is Heme A synthase from Bartonella quintana (strain Toulouse) (Rochalimaea quintana).